Consider the following 182-residue polypeptide: Crossover junction endodeoxyribonuclease RuvC (182 aa).

Active-site residues include aspartate 7, glutamate 67, and aspartate 139. Positions 7, 67, and 139 each coordinate Mg(2+).

It belongs to the RuvC family. In terms of assembly, homodimer which binds Holliday junction (HJ) DNA. The HJ becomes 2-fold symmetrical on binding to RuvC with unstacked arms; it has a different conformation from HJ DNA in complex with RuvA. In the full resolvosome a probable DNA-RuvA(4)-RuvB(12)-RuvC(2) complex forms which resolves the HJ. Mg(2+) serves as cofactor.

Its subcellular location is the cytoplasm. It catalyses the reaction Endonucleolytic cleavage at a junction such as a reciprocal single-stranded crossover between two homologous DNA duplexes (Holliday junction).. In terms of biological role, the RuvA-RuvB-RuvC complex processes Holliday junction (HJ) DNA during genetic recombination and DNA repair. Endonuclease that resolves HJ intermediates. Cleaves cruciform DNA by making single-stranded nicks across the HJ at symmetrical positions within the homologous arms, yielding a 5'-phosphate and a 3'-hydroxyl group; requires a central core of homology in the junction. The consensus cleavage sequence is 5'-(A/T)TT(C/G)-3'. Cleavage occurs on the 3'-side of the TT dinucleotide at the point of strand exchange. HJ branch migration catalyzed by RuvA-RuvB allows RuvC to scan DNA until it finds its consensus sequence, where it cleaves and resolves the cruciform DNA. The protein is Crossover junction endodeoxyribonuclease RuvC of Bordetella petrii (strain ATCC BAA-461 / DSM 12804 / CCUG 43448).